Here is a 67-residue protein sequence, read N- to C-terminus: Large ribosomal subunit protein bL35 (67 aa).

Positions 22–45 are disordered; that stretch reads GKIKRWKSGGAHYNTKKSSKRKRH. Residues 35–45 show a composition bias toward basic residues; it reads NTKKSSKRKRH.

This sequence belongs to the bacterial ribosomal protein bL35 family.

In Aquifex aeolicus (strain VF5), this protein is Large ribosomal subunit protein bL35.